The following is a 121-amino-acid chain: Large ribosomal subunit protein bL17 (121 aa).

Belongs to the bacterial ribosomal protein bL17 family. As to quaternary structure, part of the 50S ribosomal subunit. Contacts protein L32.

This is Large ribosomal subunit protein bL17 from Sulfurihydrogenibium sp. (strain YO3AOP1).